We begin with the raw amino-acid sequence, 189 residues long: RNA-binding protein (189 aa).

The C4-type zinc finger occupies 55 to 69; that stretch reads CICPSSNHLVDDCVC. The disordered stretch occupies residues 114 to 189; the sequence is FLTSVNPGES…DANTRKSKRK (76 aa). Basic and acidic residues predominate over residues 158–167; the sequence is SSSERKRKEY. Over residues 168-180 the composition is skewed to low complexity; the sequence is SSNSETDLSSDSD.

This sequence belongs to the phytoreovirus RNA-binding protein family.

It is found in the host cytoplasm. Constituent of viral factories. Binds to ssRNA and dsRNA. In Alopecurus aequalis (Barnyard grass), this protein is RNA-binding protein.